Consider the following 160-residue polypeptide: Transcription elongation factor GreA (160 aa).

A coiled-coil region spans residues 50–70 (AAREQQSFNEGRIQELEAKLS).

Belongs to the GreA/GreB family.

Functionally, necessary for efficient RNA polymerase transcription elongation past template-encoded arresting sites. The arresting sites in DNA have the property of trapping a certain fraction of elongating RNA polymerases that pass through, resulting in locked ternary complexes. Cleavage of the nascent transcript by cleavage factors such as GreA or GreB allows the resumption of elongation from the new 3'terminus. GreA releases sequences of 2 to 3 nucleotides. This chain is Transcription elongation factor GreA, found in Legionella pneumophila (strain Corby).